Here is a 266-residue protein sequence, read N- to C-terminus: Putative carbamate hydrolase RutD (266 aa).

This sequence belongs to the AB hydrolase superfamily. Hydrolase RutD family.

The enzyme catalyses carbamate + 2 H(+) = NH4(+) + CO2. Its function is as follows. Involved in pyrimidine catabolism. May facilitate the hydrolysis of carbamate, a reaction that can also occur spontaneously. The polypeptide is Putative carbamate hydrolase RutD (Escherichia coli O111:H- (strain 11128 / EHEC)).